Reading from the N-terminus, the 397-residue chain is tRNA-specific 2-thiouridylase MnmA (397 aa).

ATP contacts are provided by residues 19-26 and Leu45; that span reads AMSGGVDS. Cys113 serves as the catalytic Nucleophile. The cysteines at positions 113 and 210 are disulfide-linked. Gly137 provides a ligand contact to ATP. An interaction with tRNA region spans residues 160 to 162; that stretch reads RDQ. Cys210 (cysteine persulfide intermediate) is an active-site residue.

The protein belongs to the MnmA/TRMU family.

Its subcellular location is the cytoplasm. The catalysed reaction is S-sulfanyl-L-cysteinyl-[protein] + uridine(34) in tRNA + AH2 + ATP = 2-thiouridine(34) in tRNA + L-cysteinyl-[protein] + A + AMP + diphosphate + H(+). Catalyzes the 2-thiolation of uridine at the wobble position (U34) of tRNA, leading to the formation of s(2)U34. This Bradyrhizobium sp. (strain BTAi1 / ATCC BAA-1182) protein is tRNA-specific 2-thiouridylase MnmA.